A 328-amino-acid chain; its full sequence is 2,3-diketo-L-gulonate-binding periplasmic protein YiaO (328 aa).

Positions 1–24 are cleaved as a signal peptide; that stretch reads MKLRSVTYALFIAGLAAFSTSSLA.

The complex comprises the extracytoplasmic solute receptor protein YiaO, and the two transmembrane proteins YiaM and YiaN.

The protein resides in the periplasm. Functionally, part of the tripartite ATP-independent periplasmic (TRAP) transport system YiaMNO involved in the uptake of 2,3-diketo-L-gulonate. This protein specifically binds 2,3-diketo-L-gulonate. Is not able to bind either L-ascorbate or dehydroascorbate. This chain is 2,3-diketo-L-gulonate-binding periplasmic protein YiaO (yiaO), found in Escherichia coli (strain K12).